A 595-amino-acid chain; its full sequence is Mitoguardin 1 (595 aa).

Transmembrane regions (helical) follow at residues 11 to 31 and 38 to 58; these read LPIK…YYSL and TGTK…IIIA.

It belongs to the mitoguardin family. As to quaternary structure, homodimer and heterodimer; forms heterodimers with miga2.

It is found in the mitochondrion outer membrane. In terms of biological role, regulator of mitochondrial fusion: acts by forming homo- and heterodimers at the mitochondrial outer membrane and facilitating the formation of pld6/MitoPLD dimers. May act by regulating phospholipid metabolism via pld6/MitoPLD. The protein is Mitoguardin 1 of Danio rerio (Zebrafish).